Reading from the N-terminus, the 276-residue chain is Omega-amidase NIT2 (276 aa).

One can recognise a CN hydrolase domain in the interval 4-248; that stretch reads FRLALIQLQV…ETILYSDIDL (245 aa). At serine 26 the chain carries Phosphoserine. Glutamate 43 functions as the Proton acceptor in the catalytic mechanism. N6-acetyllysine; alternate is present on lysine 68. N6-succinyllysine; alternate is present on lysine 68. The Proton donor role is filled by lysine 112. Lysine 123 and lysine 130 each carry N6-succinyllysine. Cysteine 153 acts as the Nucleophile in catalysis.

It belongs to the carbon-nitrogen hydrolase superfamily. NIT1/NIT2 family. Homodimer.

It is found in the cytoplasm. The catalysed reaction is a monoamide of a dicarboxylate + H2O = a dicarboxylate + NH4(+). It catalyses the reaction 2-oxoglutaramate + H2O = 2-oxoglutarate + NH4(+). It carries out the reaction 2-oxosuccinamate + H2O = oxaloacetate + NH4(+). Its function is as follows. Has omega-amidase activity. The role of omega-amidase is to remove potentially toxic intermediates by converting 2-oxoglutaramate and 2-oxosuccinamate to biologically useful 2-oxoglutarate and oxaloacetate, respectively. Can also hydrolyze gamma-monomethyl-alpha-ketoglutarate in vitro. The protein is Omega-amidase NIT2 of Mus musculus (Mouse).